A 204-amino-acid polypeptide reads, in one-letter code: Leucyl/phenylalanyl-tRNA--protein transferase (204 aa).

This sequence belongs to the L/F-transferase family.

Its subcellular location is the cytoplasm. It carries out the reaction N-terminal L-lysyl-[protein] + L-leucyl-tRNA(Leu) = N-terminal L-leucyl-L-lysyl-[protein] + tRNA(Leu) + H(+). It catalyses the reaction N-terminal L-arginyl-[protein] + L-leucyl-tRNA(Leu) = N-terminal L-leucyl-L-arginyl-[protein] + tRNA(Leu) + H(+). The enzyme catalyses L-phenylalanyl-tRNA(Phe) + an N-terminal L-alpha-aminoacyl-[protein] = an N-terminal L-phenylalanyl-L-alpha-aminoacyl-[protein] + tRNA(Phe). In terms of biological role, functions in the N-end rule pathway of protein degradation where it conjugates Leu, Phe and, less efficiently, Met from aminoacyl-tRNAs to the N-termini of proteins containing an N-terminal arginine or lysine. This is Leucyl/phenylalanyl-tRNA--protein transferase from Brucella melitensis biotype 2 (strain ATCC 23457).